The primary structure comprises 158 residues: Dysbindin domain-containing protein 2 (158 aa).

Residues 79-158 are disordered; it reads FLPCEESSPA…DGGAEPGPCS (80 aa). The segment covering 106–131 has biased composition (low complexity); that stretch reads PTSDRTTSRTSSLSSDSSNLRSPNPS. 2 positions are modified to phosphoserine: Ser119 and Ser120. Thr137 carries the post-translational modification Phosphothreonine. Phosphoserine is present on Ser142. Residues 142 to 151 show a composition bias toward acidic residues; the sequence is SDEEDGDDGG.

This sequence belongs to the dysbindin family. As to quaternary structure, monomer. Interacts with CSNK1D and CSNK1E.

Functionally, may modulate the activity of casein kinase-1. Inhibits CSNK1D autophosphorylation (in vitro). This Mus musculus (Mouse) protein is Dysbindin domain-containing protein 2 (Dbndd2).